The primary structure comprises 390 residues: Caveolae-associated protein 1 (390 aa).

An N-acetylmethionine modification is found at M1. A disordered region spans residues 1–40 (MEDPTLYIVERPLPGYPDAEAPEPSSAGAQAAEEPSGAGS). The required for homotrimerization and for interaction with CAVIN2 and CAVIN3 stretch occupies residues 1–98 (MEDPTLYIVE…IQGELSKLGK (98 aa)). Low complexity predominate over residues 22–40 (PEPSSAGAQAAEEPSGAGS). A phosphoserine mark is found at S36, S40, and S46. The segment at 52-62 (VLVLSLLDKII) is nuclear export signal. The segment at 53–75 (LVLSLLDKIIGAVDQIQLTQAQL) is leucine-zipper 1. K116 participates in a covalent cross-link: Glycyl lysine isopeptide (Lys-Gly) (interchain with G-Cter in SUMO2). S118 bears the Phosphoserine mark. Residue K122 forms a Glycyl lysine isopeptide (Lys-Gly) (interchain with G-Cter in SUMO2) linkage. The segment at 136–152 (KKLEVNEAELLRRRNFK) is nuclear localization signal. Y156 is subject to Phosphotyrosine. K161 is covalently cross-linked (Glycyl lysine isopeptide (Lys-Gly) (interchain with G-Cter in SUMO1); alternate). K161 is covalently cross-linked (Glycyl lysine isopeptide (Lys-Gly) (interchain with G-Cter in SUMO2); alternate). K165 participates in a covalent cross-link: Glycyl lysine isopeptide (Lys-Gly) (interchain with G-Cter in SUMO2). A leucine-zipper 2 region spans residues 166–186 (LSISKSLKESEALPEKEGEEL). Phosphoserine occurs at positions 167 and 169. K170 participates in a covalent cross-link: Glycyl lysine isopeptide (Lys-Gly) (interchain with G-Cter in SUMO2). S171 and S175 each carry phosphoserine. The span at 172–181 (LKESEALPEK) shows a compositional bias: basic and acidic residues. The disordered stretch occupies residues 172–201 (LKESEALPEKEGEELGEGERPEEDAAALEL). Over residues 182–201 (EGEELGEGERPEEDAAALEL) the composition is skewed to acidic residues. The stretch at 199–282 (LELSSDEAVE…RMNKLGTRLV (84 aa)) forms a coiled coil. 2 positions are modified to phosphoserine: S202 and S203. The tract at residues 233-249 (KKAFSKEKMEKTKVRTR) is nuclear localization signal. Positions 257–297 (LKTKENLEKTRHTLEKRMNKLGTRLVPAERREKLKTSRDKL) are leucine-zipper 3. Position 300 is a phosphoserine (S300). At T302 the chain carries Phosphothreonine. Y308 is modified (phosphotyrosine). A Glycyl lysine isopeptide (Lys-Gly) (interchain with G-Cter in SUMO2) cross-link involves residue K326. Residues 344 to 366 (VGADDDEGGAERGEAGDLRRGSS) are disordered. A compositionally biased stretch (basic and acidic residues) spans 352–365 (GAERGEAGDLRRGS). 5 positions are modified to phosphoserine: S365, S366, S379, S387, and S389.

This sequence belongs to the CAVIN family. As to quaternary structure, component of the CAVIN complex composed of CAVIN1, CAVIN2, CAVIN3 and CAVIN4. Homotrimer. Interacts with TTF1. Interacts with RNA polymerase I subunit POLR1A/RPA1. Binds the 3' end of pre-rRNA. Interacts with transcription factor ZNF148. Interacts with LIPE in the adipocyte cytoplasm. Interacts with CAV1 and CAVIN3. Interacts with CAVIN2. Interacts with CAVIN4 and CAV3. Phosphorylated. Present in active and inactive forms. Changes in phosphorylation pattern may alter activity. Phosphorylation at Tyr-156 is essential for its functionin the regulation of ribosomal transcriptional activity. Post-translationally, five truncated forms are found in the caveolae. These are thought to be the result of proteolysis and may be phosphorylation-dependent. In terms of processing, monoubiquitinated.

The protein localises to the membrane. Its subcellular location is the caveola. The protein resides in the cell membrane. It is found in the microsome. It localises to the endoplasmic reticulum. The protein localises to the cytoplasm. Its subcellular location is the cytosol. The protein resides in the mitochondrion. It is found in the nucleus. Plays an important role in caveolae formation and organization. Essential for the formation of caveolae in all tissues. Core component of the CAVIN complex which is essential for recruitment of the complex to the caveolae in presence of calveolin-1 (CAV1). Essential for normal oligomerization of CAV1. Promotes ribosomal transcriptional activity in response to metabolic challenges in the adipocytes and plays an important role in the formation of the ribosomal transcriptional loop. Dissociates transcription complexes paused by DNA-bound TTF1, thereby releasing both RNA polymerase I and pre-RNA from the template. The caveolae biogenesis pathway is required for the secretion of proteins such as GASK1A. This is Caveolae-associated protein 1 from Homo sapiens (Human).